Here is a 1526-residue protein sequence, read N- to C-terminus: Ig-like and fibronectin type-III domain-containing protein 2 (1526 aa).

A signal peptide spans 1-19; it reads MMRWRLAVLFLTLLASTTG. A disordered region spans residues 20 to 39; sequence DDTTTKASVSTTTKKGTDGP. The Extracellular segment spans residues 20 to 1415; sequence DDTTTKASVS…RRSASKGSSS (1396 aa). The segment covering 24–33 has biased composition (low complexity); it reads TKASVSTTTK. In terms of domain architecture, Ig-like C2-type 1 spans 39 to 170; it reads PHLTTDDEGF…ELLEFQVEVL (132 aa). Cys-61 and Cys-154 are disulfide-bonded. N-linked (GlcNAc...) asparagine glycosylation is found at Asn-87, Asn-143, Asn-158, Asn-181, Asn-414, Asn-427, Asn-475, Asn-489, Asn-533, Asn-590, Asn-617, and Asn-662. The Fibronectin type-III 1 domain occupies 379-470; sequence APRGKRDVDF…VRNIASTNVH (92 aa). Positions 587–678 constitute a Fibronectin type-III 2 domain; that stretch reads APGNVTISEL…TAKLFSTLPT (92 aa). The WR1 domain occupies 682-724; it reads PLCTIGEPIYMNDGRVMICDAVNPCPNGFRCTGAGSDLSYCCP. N-linked (GlcNAc...) asparagine glycans are attached at residues Asn-754, Asn-871, Asn-906, Asn-939, Asn-979, Asn-1004, and Asn-1049. 2 consecutive Fibronectin type-III domains span residues 827–914 and 924–1020; these read AVRN…TKPA and APEK…AQKD. One can recognise an Ig-like C2-type 2 domain in the interval 1116–1207; sequence ASVTMKKDKI…SRVEASSEVI (92 aa). A disulfide bridge links Cys-1137 with Cys-1190. An N-linked (GlcNAc...) asparagine glycan is attached at Asn-1250. The region spanning 1314 to 1406 is the Fibronectin type-III 5 domain; the sequence is APSEVSNVRI…SAIPKDSEPR (93 aa). Residues 1416 to 1436 traverse the membrane as a helical segment; it reads AFWIVVILVVFGVLIAGLAVL. Topologically, residues 1437–1526 are cytoplasmic; it reads SKRRELPYPI…NGMRYAKLET (90 aa). The segment at 1485-1518 is disordered; it reads SATTGTAAATQSEWQSANLEANSTTDNSHEYRNG. Residues 1495–1510 are compositionally biased toward polar residues; the sequence is QSEWQSANLEANSTTD.

The protein localises to the cell membrane. This Caenorhabditis elegans protein is Ig-like and fibronectin type-III domain-containing protein 2.